Here is a 70-residue protein sequence, read N- to C-terminus: Large ribosomal subunit protein bL31 (70 aa).

Zn(2+) contacts are provided by Cys-16, Cys-18, Cys-38, and Cys-41.

It belongs to the bacterial ribosomal protein bL31 family. Type A subfamily. In terms of assembly, part of the 50S ribosomal subunit. Zn(2+) is required as a cofactor.

Functionally, binds the 23S rRNA. This Saccharopolyspora erythraea (strain ATCC 11635 / DSM 40517 / JCM 4748 / NBRC 13426 / NCIMB 8594 / NRRL 2338) protein is Large ribosomal subunit protein bL31.